The sequence spans 309 residues: Pyrroline-5-carboxylate reductase 1, mitochondrial (309 aa).

N-acetylserine is present on Ser2. NADP(+)-binding positions include 6-11 and Ser34; that span reads IGAGQL. Residues Ala8, Gln10, Leu11, Ser34, Asp36, Asn56, Val70, Lys71, and Ala97 each contribute to the NADPH site. NADP(+) is bound by residues Asn56, 69–72, and 95–97; these read AVKP and CAA. Glu164 is a binding site for L-proline. An NADPH-binding site is contributed by Asn230. Residues Ala237 and Thr238 each contribute to the L-proline site. Phosphoserine is present on residues Ser278 and Ser301.

This sequence belongs to the pyrroline-5-carboxylate reductase family. In terms of assembly, homodecamer; composed of 5 homodimers. Interacts with LTO1. In terms of tissue distribution, highly expressed in osteoblasts and skin.

Its subcellular location is the mitochondrion. It catalyses the reaction L-proline + NADP(+) = (S)-1-pyrroline-5-carboxylate + NADPH + 2 H(+). The catalysed reaction is L-proline + NAD(+) = (S)-1-pyrroline-5-carboxylate + NADH + 2 H(+). It participates in amino-acid biosynthesis; L-proline biosynthesis; L-proline from L-glutamate 5-semialdehyde: step 1/1. Functionally, oxidoreductase that catalyzes the last step in proline biosynthesis, which corresponds to the reduction of pyrroline-5-carboxylate to L-proline using NAD(P)H. At physiologic concentrations, has higher specific activity in the presence of NADH. Involved in the cellular response to oxidative stress. The protein is Pyrroline-5-carboxylate reductase 1, mitochondrial of Mus musculus (Mouse).